We begin with the raw amino-acid sequence, 396 residues long: Chorismate synthase (396 aa).

Positions 40 and 46 each coordinate NADP(+). Residues 134 to 136 (RSS), 257 to 258 (QA), Gly-302, 317 to 321 (KPIPS), and Arg-343 each bind FMN.

It belongs to the chorismate synthase family. As to quaternary structure, homotetramer. FMNH2 serves as cofactor.

The enzyme catalyses 5-O-(1-carboxyvinyl)-3-phosphoshikimate = chorismate + phosphate. The protein operates within metabolic intermediate biosynthesis; chorismate biosynthesis; chorismate from D-erythrose 4-phosphate and phosphoenolpyruvate: step 7/7. Catalyzes the anti-1,4-elimination of the C-3 phosphate and the C-6 proR hydrogen from 5-enolpyruvylshikimate-3-phosphate (EPSP) to yield chorismate, which is the branch point compound that serves as the starting substrate for the three terminal pathways of aromatic amino acid biosynthesis. This reaction introduces a second double bond into the aromatic ring system. This is Chorismate synthase from Bifidobacterium animalis subsp. lactis (strain AD011).